A 132-amino-acid chain; its full sequence is MVMTDPIADYLTRIRNANMAKHTSVEIPASSMKKSLSEILKNEGFIRDYQVEDDNKQGMIKIFLKYGPNNERVISGLKRISKPGLRNYVSAENLPKVLNGLGIAIISTSAGVITDKEAREKNVGGEVIAYVW.

This sequence belongs to the universal ribosomal protein uS8 family. In terms of assembly, part of the 30S ribosomal subunit. Contacts proteins S5 and S12.

Functionally, one of the primary rRNA binding proteins, it binds directly to 16S rRNA central domain where it helps coordinate assembly of the platform of the 30S subunit. This Lactobacillus johnsonii (strain CNCM I-12250 / La1 / NCC 533) protein is Small ribosomal subunit protein uS8.